A 2273-amino-acid chain; its full sequence is Acetyl-CoA carboxylase, mitochondrial (2273 aa).

The N-terminal 104 residues, 1–104 (KGKTITHGQS…RGNIHKHTRL (104 aa)), are a transit peptide targeting the mitochondrion. The Biotin carboxylation domain maps to 134 to 635 (VISKILIANN…STGWLDDLIL (502 aa)). The ATP-grasp domain occupies 292 to 484 (KTNFVSVPDD…LPATQLQIAM (193 aa)). 332 to 337 (GGGGKG) contacts ATP. Residue Arg-459 is part of the active site. The 75-residue stretch at 763-837 (LEAELNPTQV…EAGDVIAKLT (75 aa)) folds into the Biotinyl-binding domain. Lys-804 is modified (N6-biotinyllysine). Positions 1532-1867 (PYSVKDWLQP…KRDMSPPLLE (336 aa)) constitute a CoA carboxyltransferase N-terminal domain. The interval 1532 to 2187 (PYSVKDWLQP…EGQVIKRLQK (656 aa)) is carboxyltransferase. Positions 1776, 2080, and 2082 each coordinate CoA. A CoA carboxyltransferase C-terminal domain is found at 1871–2187 (RWDRDVDFKP…EGQVIKRLQK (317 aa)).

Biotin serves as cofactor.

Its subcellular location is the mitochondrion. It carries out the reaction hydrogencarbonate + acetyl-CoA + ATP = malonyl-CoA + ADP + phosphate + H(+). It catalyses the reaction N(6)-biotinyl-L-lysyl-[protein] + hydrogencarbonate + ATP = N(6)-carboxybiotinyl-L-lysyl-[protein] + ADP + phosphate + H(+). It participates in lipid metabolism; malonyl-CoA biosynthesis; malonyl-CoA from acetyl-CoA: step 1/1. Its function is as follows. Catalyzes the rate-limiting reaction in the mitochondrial fatty acid synthesis (FAS) type II pathway. Responsible for the production of the mitochondrial malonyl-CoA, used for the biosynthesis of the cofactor lipoic acid. This protein carries three functions: biotin carboxyl carrier protein, biotin carboxylase, and carboxyltransferase. This is Acetyl-CoA carboxylase, mitochondrial (HFA1) from Saccharomyces cerevisiae (strain YJM789) (Baker's yeast).